The following is a 607-amino-acid chain: Zinc finger CCCH domain-containing protein 66 (607 aa).

ANK repeat units lie at residues 57 to 87 (EERT…DVNR) and 92 to 124 (DGAT…NPDS). Over residues 161–178 (LNEVNGQEESEPEVEVEV) the composition is skewed to acidic residues. The disordered stretch occupies residues 161-193 (LNEVNGQEESEPEVEVEVEVSPPRGSERKEYPV). 2 consecutive C3H1-type zinc fingers follow at residues 254-276 (PCPE…HGIF) and 284-308 (QYRT…HKPE). The tract at residues 342 to 363 (ISPLPIGATTTPPLSPNGVSSP) is disordered. Polar residues predominate over residues 349 to 361 (ATTTPPLSPNGVS).

The protein is Zinc finger CCCH domain-containing protein 66 of Arabidopsis thaliana (Mouse-ear cress).